The sequence spans 379 residues: Endonuclease III homolog 1, chloroplastic (379 aa).

A chloroplast-targeting transit peptide spans 1 to 54; that stretch reads MILLVNGGAATSIHPNAARFYRIGTMSRQIHGAVSSSKHISLKTQHPLSDSNSE. The region spanning 244-272 is the HhH domain; the sequence is KYDGDIPSSLDDLLSLPGIGPKMAHLILH. The Nucleophile; for N-glycosylase activity role is filled by Lys265. Cys340, Cys347, Cys350, and Cys356 together coordinate [4Fe-4S] cluster.

It belongs to the Nth/MutY family. The cofactor is [4Fe-4S] cluster. Expressed at low levels in roots, stems, leaves and flowers.

Its subcellular location is the plastid. The protein resides in the chloroplast stroma. The protein localises to the chloroplast nucleoid. The catalysed reaction is 2'-deoxyribonucleotide-(2'-deoxyribose 5'-phosphate)-2'-deoxyribonucleotide-DNA = a 3'-end 2'-deoxyribonucleotide-(2,3-dehydro-2,3-deoxyribose 5'-phosphate)-DNA + a 5'-end 5'-phospho-2'-deoxyribonucleoside-DNA + H(+). Bifunctional DNA N-glycosylase with associated apurinic/apyrimidinic (AP) lyase function that catalyzes the first step in base excision repair (BER), the primary repair pathway for the repair of oxidative DNA damage. The DNA N-glycosylase activity releases the damaged DNA base from DNA by cleaving the N-glycosidic bond, leaving an AP site. The AP lyase activity cleaves the phosphodiester bond 3' to the AP site by a beta-elimination. Primarily recognizes and repairs oxidative base damage of pyrimidines. This is Endonuclease III homolog 1, chloroplastic from Arabidopsis thaliana (Mouse-ear cress).